The chain runs to 311 residues: Olfactory receptor 4S2 (311 aa).

Residues 1–23 (MEKINNVTEFIFWGLSQSPEIEK) are Extracellular-facing. Residue Asn6 is glycosylated (N-linked (GlcNAc...) asparagine). A helical transmembrane segment spans residues 24 to 47 (VCFVVFSFFYIIILLGNLLIMLTV). Residues 48–55 (CLSNLFKS) lie on the Cytoplasmic side of the membrane. A helical membrane pass occupies residues 56 to 77 (PMYFFLSFLSFVDICYSSVTAP). Over 78-98 (KMIVDLLAKDKTISYVGCMLQ) the chain is Extracellular. Cysteines 95 and 187 form a disulfide. The helical transmembrane segment at 99 to 118 (LFGVHFFGCTEIFILTVMAY) threads the bilayer. Residues 119 to 137 (DRYVAICKPLHYMTIMNRE) lie on the Cytoplasmic side of the membrane. The chain crosses the membrane as a helical span at residues 138-156 (TCNKMLLGTWVGGFLHSII). Over 157-193 (QVALVVQLPFCGPNEIDHYFCDVHPVLKLACTETYIV) the chain is Extracellular. A helical transmembrane segment spans residues 194 to 217 (GVVVTANSGTIALGSFVILLISYS). Residues 218 to 233 (IILVSLRKQSAEGRRK) lie on the Cytoplasmic side of the membrane. The chain crosses the membrane as a helical span at residues 234–256 (ALSTCGSHIAMVVIFFGPCTFMY). At 257–267 (MRPDTTFSEDK) the chain is on the extracellular side. Residues 268 to 287 (MVAVFYTIITPMLNPLIYTL) form a helical membrane-spanning segment. Residues 288 to 311 (RNAEVKNAMKKLWGRNVFLEAKGK) are Cytoplasmic-facing.

Belongs to the G-protein coupled receptor 1 family.

It is found in the cell membrane. Functionally, odorant receptor. The protein is Olfactory receptor 4S2 (OR4S2) of Homo sapiens (Human).